Reading from the N-terminus, the 186-residue chain is UPF0200 protein Mbar_A0975 (186 aa).

ATP is bound at residue 8 to 15 (GMPASGKS).

Belongs to the UPF0200 family.

The polypeptide is UPF0200 protein Mbar_A0975 (Methanosarcina barkeri (strain Fusaro / DSM 804)).